The primary structure comprises 197 residues: Imidazoleglycerol-phosphate dehydratase (197 aa).

Belongs to the imidazoleglycerol-phosphate dehydratase family.

The protein localises to the cytoplasm. The catalysed reaction is D-erythro-1-(imidazol-4-yl)glycerol 3-phosphate = 3-(imidazol-4-yl)-2-oxopropyl phosphate + H2O. It participates in amino-acid biosynthesis; L-histidine biosynthesis; L-histidine from 5-phospho-alpha-D-ribose 1-diphosphate: step 6/9. In Rhodopseudomonas palustris (strain HaA2), this protein is Imidazoleglycerol-phosphate dehydratase.